A 334-amino-acid chain; its full sequence is Holliday junction branch migration complex subunit RuvB (334 aa).

Positions methionine 1–threonine 181 are large ATPase domain (RuvB-L). 2 residues coordinate ADP: leucine 19 and arginine 20. Residues glutamate 26, phenylalanine 27, and isoleucine 28 each contribute to the ATP site. The ADP site is built by phenylalanine 27, isoleucine 28, glycine 61, leucine 62, glycine 63, lysine 64, threonine 65, and threonine 66. Residues leucine 62 and glycine 63 each contribute to the ATP site. ATP is bound by residues glutamate 127 to phenylalanine 129 and arginine 170. Residues tyrosine 180, proline 216, and arginine 217 each coordinate ADP. The tract at residues valine 182–glutamate 255 is small ATPAse domain (RuvB-S). Proline 216 is a binding site for ATP. Positions glycine 256 to phenylalanine 334 are head domain (RuvB-H). Residues arginine 309 and arginine 314 each contribute to the DNA site.

Belongs to the RuvB family. As to quaternary structure, homohexamer. Forms an RuvA(8)-RuvB(12)-Holliday junction (HJ) complex. HJ DNA is sandwiched between 2 RuvA tetramers; dsDNA enters through RuvA and exits via RuvB. An RuvB hexamer assembles on each DNA strand where it exits the tetramer. Each RuvB hexamer is contacted by two RuvA subunits (via domain III) on 2 adjacent RuvB subunits; this complex drives branch migration. In the full resolvosome a probable DNA-RuvA(4)-RuvB(12)-RuvC(2) complex forms which resolves the HJ.

Its subcellular location is the cytoplasm. The catalysed reaction is ATP + H2O = ADP + phosphate + H(+). Functionally, the RuvA-RuvB-RuvC complex processes Holliday junction (HJ) DNA during genetic recombination and DNA repair, while the RuvA-RuvB complex plays an important role in the rescue of blocked DNA replication forks via replication fork reversal (RFR). RuvA specifically binds to HJ cruciform DNA, conferring on it an open structure. The RuvB hexamer acts as an ATP-dependent pump, pulling dsDNA into and through the RuvAB complex. RuvB forms 2 homohexamers on either side of HJ DNA bound by 1 or 2 RuvA tetramers; 4 subunits per hexamer contact DNA at a time. Coordinated motions by a converter formed by DNA-disengaged RuvB subunits stimulates ATP hydrolysis and nucleotide exchange. Immobilization of the converter enables RuvB to convert the ATP-contained energy into a lever motion, pulling 2 nucleotides of DNA out of the RuvA tetramer per ATP hydrolyzed, thus driving DNA branch migration. The RuvB motors rotate together with the DNA substrate, which together with the progressing nucleotide cycle form the mechanistic basis for DNA recombination by continuous HJ branch migration. Branch migration allows RuvC to scan DNA until it finds its consensus sequence, where it cleaves and resolves cruciform DNA. Promotes Holliday junction (HJ) branch migration in conjunction with RuvA. Subunits can be free, ADP- or ATP-bound; nucleotide binding changes during the reaction cycle. Has a DNA-dependent ATPase activity; dsDNA and supercoiled DNA but not ssDNA stimulate activity. This Thermotoga maritima (strain ATCC 43589 / DSM 3109 / JCM 10099 / NBRC 100826 / MSB8) protein is Holliday junction branch migration complex subunit RuvB.